The following is a 565-amino-acid chain: Membrane protein insertase YidC (565 aa).

Transmembrane regions (helical) follow at residues Val-6–Asn-26, Leu-348–His-368, Trp-370–Ala-390, Gly-437–Val-457, Pro-479–Pro-499, and Pro-516–Ile-536.

This sequence belongs to the OXA1/ALB3/YidC family. Type 1 subfamily. As to quaternary structure, interacts with the Sec translocase complex via SecD. Specifically interacts with transmembrane segments of nascent integral membrane proteins during membrane integration.

It is found in the cell inner membrane. Required for the insertion and/or proper folding and/or complex formation of integral membrane proteins into the membrane. Involved in integration of membrane proteins that insert both dependently and independently of the Sec translocase complex, as well as at least some lipoproteins. Aids folding of multispanning membrane proteins. The sequence is that of Membrane protein insertase YidC from Xylella fastidiosa (strain 9a5c).